The primary structure comprises 402 residues: MAVVKTTGKKDFDRSKEHINIGTIGHVDHGKTTLTAAISTVLAKRGLAEAKDYASIDAAPEEKARGITINTAHIEYSTDKRHYAHVDCPGHADYIKNMITGAAQMDGAILVVAATDGPMPQTREHILLSKQVGVPKMVVFLNKIDLLEGEEEMVDLVEVEIRELLSSYDFDGDNTPIIRGSARGALEGKPEWEAKVLELMDAVDSYIDSPVREMDKPFLMAVEDVFTITGRGTVATGKVERGQVKLNEEVEIVGYREEPKKTVITGIEMFNKNLQTAMAGDNAGVLLRGVDRKDIERGQVIAKPKTIIPHTKFKAAIYALKKEEGGRHTPFFKNYKPQFYFRTTDVTGGIEFEPGREMVIPGDNVDLTVELIAPIAVEQGTKFSIREGGRTVGAGTVTEIIK.

The region spanning 16–211 is the tr-type G domain; the sequence is KEHINIGTIG…AVDSYIDSPV (196 aa). Residues 25–32 form a G1 region; that stretch reads GHVDHGKT. 25-32 contributes to the GTP binding site; the sequence is GHVDHGKT. Threonine 32 serves as a coordination point for Mg(2+). Residues 66–70 form a G2 region; that stretch reads GITIN. The segment at 87-90 is G3; the sequence is DCPG. GTP contacts are provided by residues 87 to 91 and 142 to 145; these read DCPGH and NKID. Residues 142 to 145 form a G4 region; that stretch reads NKID. The segment at 181 to 183 is G5; it reads SAR.

The protein belongs to the TRAFAC class translation factor GTPase superfamily. Classic translation factor GTPase family. EF-Tu/EF-1A subfamily. In terms of assembly, monomer.

It localises to the cytoplasm. The enzyme catalyses GTP + H2O = GDP + phosphate + H(+). Its function is as follows. GTP hydrolase that promotes the GTP-dependent binding of aminoacyl-tRNA to the A-site of ribosomes during protein biosynthesis. The sequence is that of Elongation factor Tu from Mesomycoplasma hyopneumoniae (strain J / ATCC 25934 / NCTC 10110) (Mycoplasma hyopneumoniae).